The following is a 341-amino-acid chain: NADH-quinone oxidoreductase subunit H 2 (341 aa).

8 helical membrane passes run 13–33, 82–102, 115–135, 161–181, 190–210, 242–262, 277–297, and 317–337; these read IVVI…IAYI, GVFL…WAVI, VGVL…IMAG, IGFV…TAIV, VLGW…VSAL, LFVL…TILF, WVPG…MFAM, and VFLP…QFAG.

The protein belongs to the complex I subunit 1 family. In terms of assembly, NDH-1 is composed of 14 different subunits. Subunits NuoA, H, J, K, L, M, N constitute the membrane sector of the complex.

The protein resides in the cell inner membrane. It carries out the reaction a quinone + NADH + 5 H(+)(in) = a quinol + NAD(+) + 4 H(+)(out). Functionally, NDH-1 shuttles electrons from NADH, via FMN and iron-sulfur (Fe-S) centers, to quinones in the respiratory chain. The immediate electron acceptor for the enzyme in this species is believed to be ubiquinone. Couples the redox reaction to proton translocation (for every two electrons transferred, four hydrogen ions are translocated across the cytoplasmic membrane), and thus conserves the redox energy in a proton gradient. This subunit may bind ubiquinone. The polypeptide is NADH-quinone oxidoreductase subunit H 2 (Rhodopseudomonas palustris (strain HaA2)).